Consider the following 381-residue polypeptide: Prostatic acid phosphatase (381 aa).

The N-terminal stretch at methionine 1 to alanine 31 is a signal peptide. A substrate-binding site is contributed by arginine 42. Histidine 43 (nucleophile) is an active-site residue. Arginine 46 is a binding site for substrate. N-linked (GlcNAc...) asparagine glycosylation is present at asparagine 93. Arginine 110 contributes to the substrate binding site. 3 disulfide bridges follow: cysteine 160-cysteine 371, cysteine 214-cysteine 312, and cysteine 346-cysteine 350. N-linked (GlcNAc...) asparagine glycosylation occurs at asparagine 219. Histidine 288 is a binding site for substrate. Aspartate 289 serves as the catalytic Proton donor. An N-linked (GlcNAc...) asparagine glycan is attached at asparagine 332.

This sequence belongs to the histidine acid phosphatase family. Homodimer; dimer formation is required for phosphatase activity. In terms of processing, N-glycosylated. Expressed in prostate epithelium. Also expressed in the pelvic nerve and sacral spinal cord. Localizes in peptidergic and non-peptidergic nociceptive (pain-sensing) neurons.

Its subcellular location is the secreted. The protein localises to the cell membrane. It localises to the lysosome membrane. The enzyme catalyses a phosphate monoester + H2O = an alcohol + phosphate. It catalyses the reaction a ribonucleoside 5'-phosphate + H2O = a ribonucleoside + phosphate. The catalysed reaction is 1-(9Z-octadecenoyl)-sn-glycero-3-phosphate + H2O = 1-(9Z-octadecenoyl)-sn-glycerol + phosphate. It carries out the reaction O-phospho-L-tyrosyl-[protein] + H2O = L-tyrosyl-[protein] + phosphate. With respect to regulation, inhibited by L(+)-tartrate. A non-specific tyrosine phosphatase that dephosphorylates a diverse number of substrates under acidic conditions (pH 4-6) including alkyl, aryl, and acyl orthophosphate monoesters and phosphorylated proteins. Has lipid phosphatase activity and inactivates lysophosphatidic acid in seminal plasma. Its function is as follows. In addition to its tyrosine phosphatase activity, also has ecto-5'-nucleotidase activity in dorsal root ganglion (DRG) neurons. Generates adenosine from AMP. This extracellular adenosine leads to a decrease in chronic pain by activating A1R in nociceptive neurons. This is Prostatic acid phosphatase (Acp3) from Rattus norvegicus (Rat).